Reading from the N-terminus, the 416-residue chain is UDP-N-acetylglucosamine 1-carboxyvinyltransferase (416 aa).

22 to 23 (KN) lines the phosphoenolpyruvate pocket. Arginine 91 lines the UDP-N-acetyl-alpha-D-glucosamine pocket. Cysteine 115 (proton donor) is an active-site residue. The residue at position 115 (cysteine 115) is a 2-(S-cysteinyl)pyruvic acid O-phosphothioketal. Residues 120–124 (RPIDL), aspartate 303, and isoleucine 325 each bind UDP-N-acetyl-alpha-D-glucosamine.

It belongs to the EPSP synthase family. MurA subfamily.

The protein resides in the cytoplasm. The enzyme catalyses phosphoenolpyruvate + UDP-N-acetyl-alpha-D-glucosamine = UDP-N-acetyl-3-O-(1-carboxyvinyl)-alpha-D-glucosamine + phosphate. It functions in the pathway cell wall biogenesis; peptidoglycan biosynthesis. Functionally, cell wall formation. Adds enolpyruvyl to UDP-N-acetylglucosamine. This Lawsonia intracellularis (strain PHE/MN1-00) protein is UDP-N-acetylglucosamine 1-carboxyvinyltransferase.